The sequence spans 221 residues: Iron-sulfur cluster repair protein YtfE (221 aa).

Belongs to the RIC family. YtfE subfamily. Homodimer.

It is found in the cytoplasm. Functionally, di-iron-containing protein involved in the repair of iron-sulfur clusters damaged by oxidative and nitrosative stress conditions. This Pectobacterium carotovorum subsp. carotovorum (strain PC1) protein is Iron-sulfur cluster repair protein YtfE.